The following is a 253-amino-acid chain: Ubiquinone biosynthesis O-methyltransferase (253 aa).

S-adenosyl-L-methionine contacts are provided by Arg-45, Gly-76, Asp-97, and Met-140.

Belongs to the methyltransferase superfamily. UbiG/COQ3 family.

It catalyses the reaction a 3-demethylubiquinol + S-adenosyl-L-methionine = a ubiquinol + S-adenosyl-L-homocysteine + H(+). It carries out the reaction a 3-(all-trans-polyprenyl)benzene-1,2-diol + S-adenosyl-L-methionine = a 2-methoxy-6-(all-trans-polyprenyl)phenol + S-adenosyl-L-homocysteine + H(+). It participates in cofactor biosynthesis; ubiquinone biosynthesis. Functionally, O-methyltransferase that catalyzes the 2 O-methylation steps in the ubiquinone biosynthetic pathway. The protein is Ubiquinone biosynthesis O-methyltransferase of Parvibaculum lavamentivorans (strain DS-1 / DSM 13023 / NCIMB 13966).